The following is a 225-amino-acid chain: Triosephosphate isomerase (225 aa).

Residue N9 to K11 participates in substrate binding. H93 functions as the Electrophile in the catalytic mechanism. E141 acts as the Proton acceptor in catalysis. Substrate contacts are provided by residues I146, G181, and A202–S203.

This sequence belongs to the triosephosphate isomerase family. Homotetramer; dimer of dimers.

The protein localises to the cytoplasm. The enzyme catalyses D-glyceraldehyde 3-phosphate = dihydroxyacetone phosphate. The protein operates within carbohydrate biosynthesis; gluconeogenesis. It functions in the pathway carbohydrate degradation; glycolysis; D-glyceraldehyde 3-phosphate from glycerone phosphate: step 1/1. In terms of biological role, involved in the gluconeogenesis. Catalyzes stereospecifically the conversion of dihydroxyacetone phosphate (DHAP) to D-glyceraldehyde-3-phosphate (G3P). This is Triosephosphate isomerase from Caldivirga maquilingensis (strain ATCC 700844 / DSM 13496 / JCM 10307 / IC-167).